The chain runs to 136 residues: Large ribosomal subunit protein uL16 (136 aa).

This sequence belongs to the universal ribosomal protein uL16 family. As to quaternary structure, part of the 50S ribosomal subunit.

Functionally, binds 23S rRNA and is also seen to make contacts with the A and possibly P site tRNAs. In Rickettsia felis (strain ATCC VR-1525 / URRWXCal2) (Rickettsia azadi), this protein is Large ribosomal subunit protein uL16.